The following is a 110-amino-acid chain: uncharacterized protein (110 aa).

This is an uncharacterized protein from Methanocaldococcus jannaschii (strain ATCC 43067 / DSM 2661 / JAL-1 / JCM 10045 / NBRC 100440) (Methanococcus jannaschii).